The primary structure comprises 453 residues: Cyclic GMP-AMP phosphodiesterase SMPDL3A (453 aa).

An N-terminal signal peptide occupies residues 1–22 (MALVRALVCCLLTAWHCRSGLG). Zn(2+) is bound by residues aspartate 45 and histidine 47. Cysteine 62 and cysteine 81 are oxidised to a cystine. A glycan (N-linked (GlcNAc...) asparagine) is linked at asparagine 69. Aspartate 110 is a Zn(2+) binding site. Position 114 (histidine 114) interacts with ATP. The N-linked (GlcNAc...) asparagine glycan is linked to asparagine 131. Asparagine 151 is a binding site for Zn(2+). Residues asparagine 151 and histidine 152 each contribute to the ATP site. N-linked (GlcNAc...) asparagine glycosylation is found at asparagine 222 and asparagine 238. Histidine 252 is a Zn(2+) binding site. Asparagine 263 is a glycosylation site (N-linked (GlcNAc...) asparagine). Zn(2+) contacts are provided by histidine 293 and histidine 295. An N-linked (GlcNAc...) asparagine glycan is attached at asparagine 356. 2 cysteine pairs are disulfide-bonded: cysteine 420-cysteine 424 and cysteine 430-cysteine 443. N-linked (GlcNAc...) asparagine glycosylation is present at asparagine 437.

The protein belongs to the acid sphingomyelinase family. In terms of assembly, monomer. Homodimer; homodimerizes following 2',3'-cGAMP-binding. The cofactor is Zn(2+). N-glycosylation is required for protein maturation, secretion and phosphodiesterase activity. As to expression, detected in blood serum. Detected in macrophages (at protein level).

The protein resides in the secreted. It catalyses the reaction 2',3'-cGAMP + H2O = 5'-pGpA(2'-5') + H(+). It carries out the reaction 5'-pGpA(2'-5') + H2O = 5'-GpA(2'-5') + phosphate. The catalysed reaction is a ribonucleoside 5'-triphosphate + H2O = a ribonucleoside 5'-diphosphate + phosphate + H(+). The enzyme catalyses ATP + H2O = ADP + phosphate + H(+). Requires micromolar levels of Zn(2+) for activity. Inhibited by millimolar levels of Zn(2+). Cyclic-nucleotide phosphodiesterase that acts as a negative regulator of innate immunity by mediating degradation of 2',3'-cGAMP, thereby inhibiting the cGAS-STING signaling. Specifically linearizes 2',3'-cGAMP into 2'5'-bond pGpA and further hydrolyzes pGpA to produce GpA. Also has in vitro nucleotide phosphodiesterase activity with nucleoside triphosphates, such as ATP. Has in vitro activity with p-nitrophenyl-TMP. Has lower activity with nucleoside diphosphates, and no activity with nucleoside monophosphates. Has in vitro activity with CDP-choline, giving rise to CMP and phosphocholine. Has in vitro activity with CDP-ethanolamine. Does not have sphingomyelin phosphodiesterase activity. The protein is Cyclic GMP-AMP phosphodiesterase SMPDL3A of Homo sapiens (Human).